Consider the following 46-residue polypeptide: Protein PsbN (46 aa).

A helical membrane pass occupies residues 10–30 (IAITILIVLLGLTAFGVYTAF).

It belongs to the PsbN family.

It is found in the cellular thylakoid membrane. In terms of biological role, may play a role in photosystem I and II biogenesis. This Prochlorococcus marinus (strain SARG / CCMP1375 / SS120) protein is Protein PsbN.